Reading from the N-terminus, the 125-residue chain is Small ribosomal subunit protein uS13 (125 aa).

The protein belongs to the universal ribosomal protein uS13 family. As to quaternary structure, part of the 30S ribosomal subunit. Forms a loose heterodimer with protein S19. Forms two bridges to the 50S subunit in the 70S ribosome.

Located at the top of the head of the 30S subunit, it contacts several helices of the 16S rRNA. In the 70S ribosome it contacts the 23S rRNA (bridge B1a) and protein L5 of the 50S subunit (bridge B1b), connecting the 2 subunits; these bridges are implicated in subunit movement. Contacts the tRNAs in the A and P-sites. This Rickettsia rickettsii (strain Iowa) protein is Small ribosomal subunit protein uS13.